The following is a 223-amino-acid chain: Adenylate kinase (223 aa).

An ATP-binding site is contributed by 10–15 (GSGKGT). The interval 30–59 (ESGAIFRQHIGGGTELGKKAKEYIDRGDLV) is NMP. Residues S31, R36, 57-59 (DLV), 84-87 (GFPR), and Q91 contribute to the AMP site. Positions 125–164 (GRRLCKNDNNHPNNIFIDAIKPDGDVCRVCGGSLSARADD) are LID. R126 contacts ATP. Residues R161 and R173 each contribute to the AMP site. G209 serves as a coordination point for ATP.

It belongs to the adenylate kinase family. In terms of assembly, monomer.

It localises to the cytoplasm. It carries out the reaction AMP + ATP = 2 ADP. It functions in the pathway purine metabolism; AMP biosynthesis via salvage pathway; AMP from ADP: step 1/1. In terms of biological role, catalyzes the reversible transfer of the terminal phosphate group between ATP and AMP. Plays an important role in cellular energy homeostasis and in adenine nucleotide metabolism. The protein is Adenylate kinase of Nitratidesulfovibrio vulgaris (strain DSM 19637 / Miyazaki F) (Desulfovibrio vulgaris).